We begin with the raw amino-acid sequence, 501 residues long: Cytochrome P450 7A1 (501 aa).

The helical transmembrane segment at 4–24 (IFWIWGICLSVCCCLWLILGL) threads the bilayer. A heme-binding site is contributed by Cys441.

This sequence belongs to the cytochrome P450 family. Requires heme as cofactor. In terms of tissue distribution, detected in liver.

The protein resides in the endoplasmic reticulum membrane. The protein localises to the microsome membrane. It carries out the reaction cholesterol + reduced [NADPH--hemoprotein reductase] + O2 = 7alpha-hydroxycholesterol + oxidized [NADPH--hemoprotein reductase] + H2O + H(+). It catalyses the reaction 4beta-hydroxycholesterol + reduced [NADPH--hemoprotein reductase] + O2 = 4beta,7alpha-dihydroxycholesterol + oxidized [NADPH--hemoprotein reductase] + H2O + H(+). The enzyme catalyses lathosterol + reduced [NADPH--hemoprotein reductase] + O2 = 7alpha,8alpha-epoxy-5alpha-cholestan-3beta-ol + oxidized [NADPH--hemoprotein reductase] + H2O + H(+). The catalysed reaction is lathosterol + reduced [NADPH--hemoprotein reductase] + O2 = 5alpha-cholestan-7-oxo-3beta-ol + oxidized [NADPH--hemoprotein reductase] + H2O + H(+). It carries out the reaction 7-dehydrocholesterol + reduced [NADPH--hemoprotein reductase] + O2 = 7-oxocholesterol + oxidized [NADPH--hemoprotein reductase] + H2O + H(+). It catalyses the reaction (24S)-hydroxycholesterol + reduced [NADPH--hemoprotein reductase] + O2 = (24S)-7alpha-dihydroxycholesterol + oxidized [NADPH--hemoprotein reductase] + H2O + H(+). The enzyme catalyses (24R)-hydroxycholesterol + reduced [NADPH--hemoprotein reductase] + O2 = (24R)-7alpha-dihydroxycholesterol + oxidized [NADPH--hemoprotein reductase] + H2O + H(+). It participates in lipid metabolism; bile acid biosynthesis. Its pathway is steroid metabolism; cholesterol degradation. In terms of biological role, a cytochrome P450 monooxygenase involved in the metabolism of endogenous cholesterol and its oxygenated derivatives (oxysterols). Mechanistically, uses molecular oxygen inserting one oxygen atom into a substrate, and reducing the second into a water molecule, with two electrons provided by NADPH via cytochrome P450 reductase (CPR; NADPH-ferrihemoprotein reductase). Functions as a critical regulatory enzyme of bile acid biosynthesis and cholesterol homeostasis. Catalyzes the hydroxylation of carbon hydrogen bond at 7-alpha position of cholesterol, a rate-limiting step in cholesterol catabolism and bile acid biosynthesis. 7-alpha hydroxylates several oxysterols, including 4beta-hydroxycholesterol and 24-hydroxycholesterol. Catalyzes the oxidation of the 7,8 double bond of 7-dehydrocholesterol and lathosterol with direct and predominant formation of the 7-keto derivatives. The chain is Cytochrome P450 7A1 (CYP7A1) from Oryctolagus cuniculus (Rabbit).